A 177-amino-acid chain; its full sequence is MSRVAKNPVVIPKGVEVSISAAEIAIKGPLGTLVRPQHPAVTVEQDGEALVCKARDGQVNARAMSGTVRALLNNMVVGVSKGFERKLLLVGVGYRAQAQGDKLNLSLGFSHPVVHQMPAGVKVETPSQTEIVIKGVDKQQVGQVAAEVRAYRAPEPYKGKGVRYSDEVVVLKETKKK.

It belongs to the universal ribosomal protein uL6 family. Part of the 50S ribosomal subunit.

This protein binds to the 23S rRNA, and is important in its secondary structure. It is located near the subunit interface in the base of the L7/L12 stalk, and near the tRNA binding site of the peptidyltransferase center. The polypeptide is Large ribosomal subunit protein uL6 (Azoarcus sp. (strain BH72)).